A 421-amino-acid chain; its full sequence is Histidine--tRNA ligase (421 aa).

It belongs to the class-II aminoacyl-tRNA synthetase family. As to quaternary structure, homodimer.

Its subcellular location is the cytoplasm. It catalyses the reaction tRNA(His) + L-histidine + ATP = L-histidyl-tRNA(His) + AMP + diphosphate + H(+). This chain is Histidine--tRNA ligase, found in Solidesulfovibrio magneticus (strain ATCC 700980 / DSM 13731 / RS-1) (Desulfovibrio magneticus).